Here is a 441-residue protein sequence, read N- to C-terminus: MRVSSALLQKAAKTVDKYSLYVPKSGVFPKGFKVASLASGVKKNGNRDLGIILNTNKSRPSNAAAVFTTNRFKAAPVLVSKQVLDGSSGEGVNAIVANSGCANAVTGELGMQDAQKVAGQVNAHIGKENSTLVMSTGVIGQRLQMDKISKGINTLFDQKQFGSDFNSWLNLAKSICTTDTFPKLISSKFQLSDGTEYTLTGISKGAGMICPNMATLLGFIVTDLPIKASTLQAMLTAAVNRSFNCISVDGDMSTNDTICMLANGAVDTFVIDEASPDFEQVKSQVTEFAKQLAQLVVRDGEGATKFVTVNVKNSANFKDARIIAETISNSMLVKSALYGQDANWGRILCAIGYSKLENLASLDESKINVSFIATDNSSPRELKLIANGVPQFDIDENRASEILALPDLEILVDMGTGSEECQFWTCDLSHEYVTINGDYRS.

Residues Thr177, Lys204, Thr215, Glu301, Asn436, and Ser441 each coordinate substrate. Thr215 serves as the catalytic Nucleophile.

This sequence belongs to the ArgJ family. In terms of assembly, heterodimer of an alpha and a beta chain. The alpha and beta chains are autoproteolytically processed from a single precursor protein within the mitochondrion.

The protein resides in the mitochondrion matrix. It carries out the reaction N(2)-acetyl-L-ornithine + L-glutamate = N-acetyl-L-glutamate + L-ornithine. It catalyses the reaction L-glutamate + acetyl-CoA = N-acetyl-L-glutamate + CoA + H(+). It participates in amino-acid biosynthesis; L-arginine biosynthesis; L-ornithine and N-acetyl-L-glutamate from L-glutamate and N(2)-acetyl-L-ornithine (cyclic): step 1/1. The protein operates within amino-acid biosynthesis; L-arginine biosynthesis; N(2)-acetyl-L-ornithine from L-glutamate: step 1/4. Functionally, catalyzes two activities which are involved in the cyclic version of arginine biosynthesis: the synthesis of acetylglutamate from glutamate and acetyl-CoA, and of ornithine by transacetylation between acetylornithine and glutamate. The polypeptide is Arginine biosynthesis bifunctional protein ArgJ, mitochondrial (Lachancea thermotolerans (strain ATCC 56472 / CBS 6340 / NRRL Y-8284) (Yeast)).